Consider the following 59-residue polypeptide: Large ribosomal subunit protein uL30 (59 aa).

Belongs to the universal ribosomal protein uL30 family. As to quaternary structure, part of the 50S ribosomal subunit.

This is Large ribosomal subunit protein uL30 from Sodalis glossinidius (strain morsitans).